The primary structure comprises 179 residues: Large ribosomal subunit protein uL5 (179 aa).

The protein belongs to the universal ribosomal protein uL5 family. As to quaternary structure, part of the 50S ribosomal subunit; part of the 5S rRNA/L5/L18/L25 subcomplex. Contacts the 5S rRNA and the P site tRNA. Forms a bridge to the 30S subunit in the 70S ribosome.

In terms of biological role, this is one of the proteins that bind and probably mediate the attachment of the 5S RNA into the large ribosomal subunit, where it forms part of the central protuberance. In the 70S ribosome it contacts protein S13 of the 30S subunit (bridge B1b), connecting the 2 subunits; this bridge is implicated in subunit movement. Contacts the P site tRNA; the 5S rRNA and some of its associated proteins might help stabilize positioning of ribosome-bound tRNAs. In Vibrio atlanticus (strain LGP32) (Vibrio splendidus (strain Mel32)), this protein is Large ribosomal subunit protein uL5.